A 159-amino-acid polypeptide reads, in one-letter code: 3-hydroxyacyl-[acyl-carrier-protein] dehydratase FabZ (159 aa).

Residue His58 is part of the active site.

It belongs to the thioester dehydratase family. FabZ subfamily.

It is found in the cytoplasm. The enzyme catalyses a (3R)-hydroxyacyl-[ACP] = a (2E)-enoyl-[ACP] + H2O. In terms of biological role, involved in unsaturated fatty acids biosynthesis. Catalyzes the dehydration of short chain beta-hydroxyacyl-ACPs and long chain saturated and unsaturated beta-hydroxyacyl-ACPs. The sequence is that of 3-hydroxyacyl-[acyl-carrier-protein] dehydratase FabZ from Helicobacter pylori (strain P12).